Reading from the N-terminus, the 387-residue chain is Succinate--CoA ligase [ADP-forming] subunit beta (387 aa).

The region spanning 9–245 (KDLLESYGLK…KSQENAKELK (237 aa)) is the ATP-grasp domain. Residues Lys46, 53 to 55 (GRG), Glu100, Tyr103, and Glu108 each bind ATP. Residues Asn200 and Asp214 each coordinate Mg(2+). Residues Asn265 and 322–324 (GIV) each bind substrate.

This sequence belongs to the succinate/malate CoA ligase beta subunit family. In terms of assembly, heterotetramer of two alpha and two beta subunits. Mg(2+) serves as cofactor.

It carries out the reaction succinate + ATP + CoA = succinyl-CoA + ADP + phosphate. It catalyses the reaction GTP + succinate + CoA = succinyl-CoA + GDP + phosphate. Its pathway is carbohydrate metabolism; tricarboxylic acid cycle; succinate from succinyl-CoA (ligase route): step 1/1. In terms of biological role, succinyl-CoA synthetase functions in the citric acid cycle (TCA), coupling the hydrolysis of succinyl-CoA to the synthesis of either ATP or GTP and thus represents the only step of substrate-level phosphorylation in the TCA. The beta subunit provides nucleotide specificity of the enzyme and binds the substrate succinate, while the binding sites for coenzyme A and phosphate are found in the alpha subunit. The chain is Succinate--CoA ligase [ADP-forming] subunit beta from Francisella tularensis subsp. tularensis (strain FSC 198).